We begin with the raw amino-acid sequence, 196 residues long: [1-hydroxy-2-(trimethylamino)ethyl]phosphonate dioxygenase (glycine-betaine-forming) (196 aa).

Residue Tyr30 coordinates [(1R)-1-hydroxy-2-(trimethylamino)ethyl]phosphonate. The Fe cation site is built by Tyr30, His40, His64, and Asp65. The HD domain maps to 37–156 (MAEHMLQGAT…VAEFEKNPNL (120 aa)). [(1R)-1-hydroxy-2-(trimethylamino)ethyl]phosphonate is bound by residues His68, His86, His109, Lys113, Ser131, Ser134, and Arg163. The Fe cation site is built by His86 and His109. Asp166 contacts Fe cation.

Fe cation is required as a cofactor.

The catalysed reaction is [(1R)-1-hydroxy-2-(trimethylamino)ethyl]phosphonate + O2 = glycine betaine + phosphate + 2 H(+). Involved in the degradation of the naturally occurring organophosphonate 2-(trimethylammonio)ethylphosphonate (TMAEP). Catalyzes the O(2)-dependent cleavage of (R)-1-hydroxy-2-(trimethylammonio)ethylphosphonate (OH-TMAEP) to yield glycine betaine and phosphate. Is highly specific for its N-trimethylated substrate. The protein is [1-hydroxy-2-(trimethylamino)ethyl]phosphonate dioxygenase (glycine-betaine-forming) of Leisingera caerulea (Phaeobacter caeruleus).